A 302-amino-acid polypeptide reads, in one-letter code: 33 kDa chaperonin (302 aa).

Disulfide bonds link Cys-255-Cys-257 and Cys-288-Cys-291.

This sequence belongs to the HSP33 family. Post-translationally, under oxidizing conditions two disulfide bonds are formed involving the reactive cysteines. Under reducing conditions zinc is bound to the reactive cysteines and the protein is inactive.

The protein localises to the cytoplasm. Redox regulated molecular chaperone. Protects both thermally unfolding and oxidatively damaged proteins from irreversible aggregation. Plays an important role in the bacterial defense system toward oxidative stress. This is 33 kDa chaperonin from Caulobacter vibrioides (strain ATCC 19089 / CIP 103742 / CB 15) (Caulobacter crescentus).